The following is a 101-amino-acid chain: Small ribosomal subunit protein uS14 (101 aa).

It belongs to the universal ribosomal protein uS14 family. Part of the 30S ribosomal subunit. Contacts proteins S3 and S10.

Binds 16S rRNA, required for the assembly of 30S particles and may also be responsible for determining the conformation of the 16S rRNA at the A site. The sequence is that of Small ribosomal subunit protein uS14 from Pseudomonas putida (strain W619).